The sequence spans 66 residues: Large ribosomal subunit protein bL35 (66 aa).

Positions 1 to 16 (MPKQKTHRASAKRFKR) are enriched in basic residues. The interval 1 to 20 (MPKQKTHRASAKRFKRTGNG) is disordered.

This sequence belongs to the bacterial ribosomal protein bL35 family.

This is Large ribosomal subunit protein bL35 from Lactococcus lactis subsp. lactis (strain IL1403) (Streptococcus lactis).